The following is a 353-amino-acid chain: 3-dehydroquinate synthase (353 aa).

It belongs to the archaeal-type DHQ synthase family.

The enzyme catalyses 2-amino-2,3,7-trideoxy-D-lyxo-hept-6-ulosonate + NAD(+) + H2O = 3-dehydroquinate + NH4(+) + NADH + H(+). In terms of biological role, catalyzes the oxidative deamination and cyclization of 2-amino-3,7-dideoxy-D-threo-hept-6-ulosonic acid (ADH) to yield 3-dehydroquinate (DHQ), which is fed into the canonical shikimic pathway of aromatic amino acid biosynthesis. This is 3-dehydroquinate synthase from Nitrosopumilus maritimus (strain SCM1).